Reading from the N-terminus, the 226-residue chain is ATP synthase F(0) complex subunit a (226 aa).

Transmembrane regions (helical) follow at residues 12-32 (PTMMGLPIVILIVLFPSILFP), 68-88 (WALMLISLILFIGSTNLLGLL), 97-117 (QLSMNLGMAIPLWAGTVITGF), 138-158 (IPMLVIIETISLFIQPMALAV), 164-184 (ITAGHLLIHLIGGATLALMDI), and 189-209 (AFITFTILILLTILEFAVALI).

Belongs to the ATPase A chain family. As to quaternary structure, component of the ATP synthase complex composed at least of ATP5F1A/subunit alpha, ATP5F1B/subunit beta, ATP5MC1/subunit c (homooctomer), MT-ATP6/subunit a, MT-ATP8/subunit 8, ATP5ME/subunit e, ATP5MF/subunit f, ATP5MG/subunit g, ATP5MK/subunit k, ATP5MJ/subunit j, ATP5F1C/subunit gamma, ATP5F1D/subunit delta, ATP5F1E/subunit epsilon, ATP5PF/subunit F6, ATP5PB/subunit b, ATP5PD/subunit d, ATP5PO/subunit OSCP. ATP synthase complex consists of a soluble F(1) head domain (subunits alpha(3) and beta(3)) - the catalytic core - and a membrane F(0) domain - the membrane proton channel (subunits c, a, 8, e, f, g, k and j). These two domains are linked by a central stalk (subunits gamma, delta, and epsilon) rotating inside the F1 region and a stationary peripheral stalk (subunits F6, b, d, and OSCP). Interacts with DNAJC30; interaction is direct.

It localises to the mitochondrion inner membrane. It catalyses the reaction H(+)(in) = H(+)(out). Its function is as follows. Subunit a, of the mitochondrial membrane ATP synthase complex (F(1)F(0) ATP synthase or Complex V) that produces ATP from ADP in the presence of a proton gradient across the membrane which is generated by electron transport complexes of the respiratory chain. ATP synthase complex consist of a soluble F(1) head domain - the catalytic core - and a membrane F(1) domain - the membrane proton channel. These two domains are linked by a central stalk rotating inside the F(1) region and a stationary peripheral stalk. During catalysis, ATP synthesis in the catalytic domain of F(1) is coupled via a rotary mechanism of the central stalk subunits to proton translocation. With the subunit c (ATP5MC1), forms the proton-conducting channel in the F(0) domain, that contains two crucial half-channels (inlet and outlet) that facilitate proton movement from the mitochondrial intermembrane space (IMS) into the matrix. Protons are taken up via the inlet half-channel and released through the outlet half-channel, following a Grotthuss mechanism. This Phoca vitulina (Harbor seal) protein is ATP synthase F(0) complex subunit a.